The primary structure comprises 341 residues: Major capsid protein (341 aa).

The stretch at 109 to 129 (RRIILQNMKDEELAIAQVEEK) forms a coiled coil.

Belongs to the lambda phage major capsid protein family. In terms of assembly, homomultimer.

Its subcellular location is the virion. It is found in the host cytoplasm. Assembles to form an icosahedral capsid with a T=7 symmetry. The icosahedral capsid is about 60 nm in diameter and composed of 415 major capsid proteins. The assembly is primed by the interaction between capsid assembly protease and portal dodecamer, and major capsid proteins assemble cooperatively to form the procapsid with the help of capsid scaffolding protein. Major capsid protein forms hexons and pentons of the icosahedron. Viral genomic DNA is packaged into the procapsid through the portal vertex. The packaging triggers a dramatic reconfiguration of the capsid shell. The sequence is that of Major capsid protein from Escherichia coli (Bacteriophage N15).